The primary structure comprises 219 residues: Interleukin-12 subunit alpha (219 aa).

Residues 1–22 (MCPARSLLLVATLVLLDYLSLA) form the signal peptide. 3 N-linked (GlcNAc...) asparagine glycosylation sites follow: asparagine 24, asparagine 93, and asparagine 107. Intrachain disulfides connect cysteine 37–cysteine 110, cysteine 64–cysteine 196, and cysteine 85–cysteine 123.

The protein belongs to the IL-6 superfamily. In terms of assembly, heterodimer with IL12B; disulfide-linked. This heterodimer is known as interleukin IL-12. Heterodimer with EBI3/IL27B; not disulfide-linked. This heterodimer is known as interleukin IL-35. Interacts with NBR1; this interaction promotes IL-12 secretion.

The protein resides in the secreted. In terms of biological role, heterodimerizes with IL12B to form the IL-12 cytokine or with EBI3/IL27B to form the IL-35 cytokine. IL-12 is primarily produced by professional antigen-presenting cells (APCs) such as B-cells and dendritic cells (DCs) as well as macrophages and granulocytes and regulates T-cell and natural killer-cell responses, induces the production of interferon-gamma (IFN-gamma), favors the differentiation of T-helper 1 (Th1) cells and is an important link between innate resistance and adaptive immunity. Mechanistically, exerts its biological effects through a receptor composed of IL12R1 and IL12R2 subunits. Binding to the receptor results in the rapid tyrosine phosphorylation of a number of cellular substrates including the JAK family kinases TYK2 and JAK2. In turn, recruited STAT4 gets phosphorylated and translocates to the nucleus where it regulates cytokine/growth factor responsive genes. As part of IL-35, plays essential roles in maintaining the immune homeostasis of the liver microenvironment and also functions as an immune-suppressive cytokine. Mediates biological events through unconventional receptors composed of IL12RB2 and gp130/IL6ST heterodimers or homodimers. Signaling requires the transcription factors STAT1 and STAT4, which form a unique heterodimer that binds to distinct DNA sites. In Cercocebus atys (Sooty mangabey), this protein is Interleukin-12 subunit alpha (IL12A).